The primary structure comprises 273 residues: tRNA pseudouridine synthase B (273 aa).

Residue D38 is the Nucleophile of the active site.

This sequence belongs to the pseudouridine synthase TruB family. Type 1 subfamily.

The catalysed reaction is uridine(55) in tRNA = pseudouridine(55) in tRNA. Functionally, responsible for synthesis of pseudouridine from uracil-55 in the psi GC loop of transfer RNAs. This chain is tRNA pseudouridine synthase B, found in Campylobacter curvus (strain 525.92).